We begin with the raw amino-acid sequence, 79 residues long: MAHKQIYYSDKYFDEHYEYRHVMLPRELSKQVPKTHLMSEEEWRRLGVQQSLGWVHYMIHEPEPHILLFRRPLPKDQQK.

An N6-acetyllysine modification is found at lysine 4.

This sequence belongs to the CKS family. As to quaternary structure, forms a homohexamer that can probably bind six kinase subunits.

In terms of biological role, binds to the catalytic subunit of the cyclin dependent kinases and is essential for their biological function. The chain is Cyclin-dependent kinases regulatory subunit 2 (CKS2) from Bos taurus (Bovine).